The primary structure comprises 600 residues: MVVVEGLAGLHRSHGCGELTAADAGKEVTLMGWVHRRRDHGGLIFIDLRDRSGLVQVVCDPKSGPAFQKAEEVRNEYVVAVRGLVRRRPEGTVNPKLPTGEIEVVAEEFRLLNRAKTPPFYIDDGIDVDEALRLRYRYLDLRRPEMQRLLYLRYRTTRAIRDFLDARGFWEIETPMLTRSTPEGARDFLVPSRLRPGEFFALPQSPQLFKQILMVAGVERYFQIVRCFRDEDLRADRQPEFTQLDMEMSFVQREDILKLVEELMAYVFRETLGVELALPLPRLTYREAMDRYGSDKPDIRFGMEIVDVSDLVAGCGFKVFAEAVARGGVVRGLCAPGCAGYSRRELDELTRQAAVFGAKGLAWMAVTPEGIRSPIAKFFTSGELEGLVARLAGKPGDLLLFVADTETTAATALGALRLEMGRRLHLYDPEQLAFTWVTEFPLLEYSAEEKRYVAVHHPFTMPMEEDWPLLDSDPLRVRALAYDLVLNGVELGGGSIRIHRRDIQEKMFNLLGFTPEAARDKFGFLLDAFEYGTPPHGGIAFGLDRMLMLMARRDTIRDCIPFPKTQSGTCLMTAAPSGVSPEQLQELHLRSTARKSTNPA.

E183 is an L-aspartate binding site. The aspartate stretch occupies residues 207-210 (QLFK). Position 229 (R229) interacts with L-aspartate. Residues 229–231 (RDE) and Q238 contribute to the ATP site. H456 provides a ligand contact to L-aspartate. E490 contributes to the ATP binding site. R497 serves as a coordination point for L-aspartate. Residue 542–545 (GLDR) coordinates ATP.

This sequence belongs to the class-II aminoacyl-tRNA synthetase family. Type 1 subfamily. As to quaternary structure, homodimer.

The protein resides in the cytoplasm. It catalyses the reaction tRNA(Asx) + L-aspartate + ATP = L-aspartyl-tRNA(Asx) + AMP + diphosphate. In terms of biological role, aspartyl-tRNA synthetase with relaxed tRNA specificity since it is able to aspartylate not only its cognate tRNA(Asp) but also tRNA(Asn). Reaction proceeds in two steps: L-aspartate is first activated by ATP to form Asp-AMP and then transferred to the acceptor end of tRNA(Asp/Asn). This chain is Aspartate--tRNA(Asp/Asn) ligase, found in Moorella thermoacetica (strain ATCC 39073 / JCM 9320).